The chain runs to 212 residues: Peptide methionine sulfoxide reductase MsrA (212 aa).

Cys-52 is a catalytic residue.

This sequence belongs to the MsrA Met sulfoxide reductase family.

It catalyses the reaction L-methionyl-[protein] + [thioredoxin]-disulfide + H2O = L-methionyl-(S)-S-oxide-[protein] + [thioredoxin]-dithiol. The catalysed reaction is [thioredoxin]-disulfide + L-methionine + H2O = L-methionine (S)-S-oxide + [thioredoxin]-dithiol. Has an important function as a repair enzyme for proteins that have been inactivated by oxidation. Catalyzes the reversible oxidation-reduction of methionine sulfoxide in proteins to methionine. This Yersinia pseudotuberculosis serotype O:1b (strain IP 31758) protein is Peptide methionine sulfoxide reductase MsrA.